A 60-amino-acid chain; its full sequence is Waprin-Lio1 (60 aa).

Positions 1 to 8 (MLLGTTSA) are cleaved as a signal peptide. Positions 9-59 (QVVRPGSCPNVDVPIPPLGLCRTTCQTDANCQEGRKCCKNGCGFMTCETAR) constitute a WAP domain. Cystine bridges form between C16-C46, C29-C50, C33-C45, and C39-C55.

Belongs to the venom waprin family. Expressed by the venom gland.

The protein resides in the secreted. In terms of biological role, damages membranes of susceptible bacteria. Has no hemolytic activity. Not toxic to mice. Does not inhibit the proteinases elastase and cathepsin G. This is Waprin-Lio1 from Erythrolamprus poecilogyrus (Water snake).